We begin with the raw amino-acid sequence, 97 residues long: YcgL domain-containing protein APP7_0754 (97 aa).

The YcgL domain occupies 6–90 (NLCAIYKSPK…PPENLLKTFL (85 aa)).

The chain is YcgL domain-containing protein APP7_0754 from Actinobacillus pleuropneumoniae serotype 7 (strain AP76).